A 297-amino-acid chain; its full sequence is Formamidopyrimidine-DNA glycosylase (297 aa).

Residue Pro2 is the Schiff-base intermediate with DNA of the active site. Glu3 acts as the Proton donor in catalysis. The active-site Proton donor; for beta-elimination activity is Lys58. His106, Arg125, and Arg168 together coordinate DNA. The segment at 259-295 adopts an FPG-type zinc-finger fold; the sequence is RVYDREGLACTARGCRGVVRRVVQSGRSTFFCEVCQP. Residue Arg285 is the Proton donor; for delta-elimination activity of the active site.

It belongs to the FPG family. Monomer. Requires Zn(2+) as cofactor.

The catalysed reaction is Hydrolysis of DNA containing ring-opened 7-methylguanine residues, releasing 2,6-diamino-4-hydroxy-5-(N-methyl)formamidopyrimidine.. It carries out the reaction 2'-deoxyribonucleotide-(2'-deoxyribose 5'-phosphate)-2'-deoxyribonucleotide-DNA = a 3'-end 2'-deoxyribonucleotide-(2,3-dehydro-2,3-deoxyribose 5'-phosphate)-DNA + a 5'-end 5'-phospho-2'-deoxyribonucleoside-DNA + H(+). In terms of biological role, involved in base excision repair of DNA damaged by oxidation or by mutagenic agents. Acts as a DNA glycosylase that recognizes and removes damaged bases. Has a preference for oxidized purines, such as 7,8-dihydro-8-oxoguanine (8-oxoG). Has AP (apurinic/apyrimidinic) lyase activity and introduces nicks in the DNA strand. Cleaves the DNA backbone by beta-delta elimination to generate a single-strand break at the site of the removed base with both 3'- and 5'-phosphates. The sequence is that of Formamidopyrimidine-DNA glycosylase from Methylobacterium nodulans (strain LMG 21967 / CNCM I-2342 / ORS 2060).